A 311-amino-acid chain; its full sequence is Probable manganese-dependent inorganic pyrophosphatase (311 aa).

Mn(2+)-binding residues include His-9, Asp-13, Asp-15, Asp-77, His-99, and Asp-151.

It belongs to the PPase class C family. Requires Mn(2+) as cofactor.

The protein resides in the cytoplasm. It catalyses the reaction diphosphate + H2O = 2 phosphate + H(+). In Streptococcus pneumoniae (strain JJA), this protein is Probable manganese-dependent inorganic pyrophosphatase.